Consider the following 424-residue polypeptide: Isoflavipucine cluster transcription factor ATEG_00326 (424 aa).

A DNA-binding region (zn(2)-C6 fungal-type) is located at residues 10–38 (CDRCHGQKLRCIHSGGGPCVRCAKAKATC). Positions 265–286 (ARMQTPEGTPERTSESSPSGPP) are disordered.

The protein resides in the nucleus. Its function is as follows. Transcription factor that regulates the expression of the gene cluster that mediates the biosynthesis of isoflavipucine. The chain is Isoflavipucine cluster transcription factor ATEG_00326 from Aspergillus terreus (strain NIH 2624 / FGSC A1156).